The primary structure comprises 236 residues: tRNA (guanine-N(1)-)-methyltransferase (236 aa).

Residues G113 and I133 to L138 each bind S-adenosyl-L-methionine.

The protein belongs to the RNA methyltransferase TrmD family. Homodimer.

The protein resides in the cytoplasm. The enzyme catalyses guanosine(37) in tRNA + S-adenosyl-L-methionine = N(1)-methylguanosine(37) in tRNA + S-adenosyl-L-homocysteine + H(+). Functionally, specifically methylates guanosine-37 in various tRNAs. This chain is tRNA (guanine-N(1)-)-methyltransferase, found in Lachnospira eligens (strain ATCC 27750 / DSM 3376 / VPI C15-48 / C15-B4) (Eubacterium eligens).